We begin with the raw amino-acid sequence, 216 residues long: Cytochrome c biogenesis ATP-binding export protein CcmA (216 aa).

The 214-residue stretch at 2 to 215 (LSVEELSCVR…SNHLRKIKLG (214 aa)) folds into the ABC transporter domain. 34–41 (GHNGAGKT) lines the ATP pocket.

It belongs to the ABC transporter superfamily. CcmA exporter (TC 3.A.1.107) family. The complex is composed of two ATP-binding proteins (CcmA) and two transmembrane proteins (CcmB).

The protein resides in the cell inner membrane. It catalyses the reaction heme b(in) + ATP + H2O = heme b(out) + ADP + phosphate + H(+). Functionally, part of the ABC transporter complex CcmAB involved in the biogenesis of c-type cytochromes; once thought to export heme, this seems not to be the case, but its exact role is uncertain. Responsible for energy coupling to the transport system. The protein is Cytochrome c biogenesis ATP-binding export protein CcmA of Photobacterium profundum (strain SS9).